Consider the following 101-residue polypeptide: Small ribosomal subunit protein uS14 (101 aa).

This sequence belongs to the universal ribosomal protein uS14 family. In terms of assembly, part of the 30S ribosomal subunit. Contacts proteins S3 and S10.

Functionally, binds 16S rRNA, required for the assembly of 30S particles and may also be responsible for determining the conformation of the 16S rRNA at the A site. This is Small ribosomal subunit protein uS14 from Brucella anthropi (strain ATCC 49188 / DSM 6882 / CCUG 24695 / JCM 21032 / LMG 3331 / NBRC 15819 / NCTC 12168 / Alc 37) (Ochrobactrum anthropi).